We begin with the raw amino-acid sequence, 248 residues long: MAGHSKWANIKHRKAAQDAKRGKLFTKFIRELTVSAREGGSDPDSNPRLRIAIDKALGGNMTRDTIERAIKRGAGELEGQQLETIIYEGYGPGGTAVMVETMTDNRNRTVSGVRNAFSKSGGNLGTDGSVAYLFTKRGVLSYAPGTDEDALMDAALEAGAEDVVSYDDGAIDVFTEPTAFYEVKDALDAAGFVSDNAEIAMIASTKAELDAETAEKFMRLIDTLEEHDDVQEVYHNAEISDEIMESLG.

The protein belongs to the TACO1 family.

Its subcellular location is the cytoplasm. The protein is Probable transcriptional regulatory protein SO_2432 of Shewanella oneidensis (strain ATCC 700550 / JCM 31522 / CIP 106686 / LMG 19005 / NCIMB 14063 / MR-1).